A 125-amino-acid polypeptide reads, in one-letter code: MEYQFTHSIHGVVAKCSMDHEAFAGWLNTEITENPKELINIFAEIEKCRAAYPNHYECVFEGKEYSLFLDCDEVMVKANNLDDTFDESQIEDGFQFYDQESIAFCGLEDFENFLKAYQKFSKTYH.

Belongs to the UPF0231 family.

This is UPF0231 protein APL_0968 from Actinobacillus pleuropneumoniae serotype 5b (strain L20).